Here is a 344-residue protein sequence, read N- to C-terminus: S-methyl-5'-thioadenosine phosphorylase (344 aa).

Residues T51, R99 to H100, and S132 to A133 each bind phosphate. M234 contacts substrate. Phosphate is bound at residue S235. D258 to D260 contacts substrate.

It belongs to the PNP/MTAP phosphorylase family. MTAP subfamily. As to quaternary structure, homotrimer.

Its subcellular location is the cytoplasm. The protein resides in the nucleus. It carries out the reaction S-methyl-5'-thioadenosine + phosphate = 5-(methylsulfanyl)-alpha-D-ribose 1-phosphate + adenine. Its pathway is amino-acid biosynthesis; L-methionine biosynthesis via salvage pathway; S-methyl-5-thio-alpha-D-ribose 1-phosphate from S-methyl-5'-thioadenosine (phosphorylase route): step 1/1. Its function is as follows. Catalyzes the reversible phosphorylation of S-methyl-5'-thioadenosine (MTA) to adenine and 5-methylthioribose-1-phosphate. Involved in the breakdown of MTA, a major by-product of polyamine biosynthesis. Responsible for the first step in the methionine salvage pathway after MTA has been generated from S-adenosylmethionine. Has broad substrate specificity with 6-aminopurine nucleosides as preferred substrates. This chain is S-methyl-5'-thioadenosine phosphorylase, found in Phaeosphaeria nodorum (strain SN15 / ATCC MYA-4574 / FGSC 10173) (Glume blotch fungus).